We begin with the raw amino-acid sequence, 308 residues long: Aldo-keto reductase AKR2E4 (308 aa).

Residues 22–29 and D53 contribute to the NADP(+) site; that span reads GTGRGTAK. Catalysis depends on Y58, which acts as the Proton donor. NADP(+)-binding positions include 158–159, R215, and 259–269; these read SN and KSTNKQRIAQN.

The protein belongs to the short-chain dehydrogenases/reductases (SDR) family. In terms of tissue distribution, detected in hemolymph (at protein level). Detected in larval ovary.

Its activity is regulated as follows. Subject to substrate inhibition by high levels of 3-dehydroecdysone. Functionally, NADP-dependent oxidoreductase with high 3-dehydroecdysone reductase activity. May play a role in the regulation of molting. Has lower activity with phenylglyoxal and isatin (in vitro). Has no activity with NADH as cosubstrate. Has no activity with nitrobenzaldehyde and 3-hydroxybenzaldehyde. The polypeptide is Aldo-keto reductase AKR2E4 (akr2e) (Bombyx mori (Silk moth)).